Reading from the N-terminus, the 479-residue chain is MSIVVKNNIHWVGQRDWEVRDFHGTEYKTLRGSSYNSYLIREEKNVLIDTVDHKFSREFVQNLRNEIDLADIDYIVINHAEEDHAGALTELMAQIPDTPIYCTANAIDSINGHHHHPEWNFNVVKTGDTLDIGNGKQLIFVETPMLHWPDSMMTYLTGDAVLFSNDAFGQHYCDEHLFNDEVDQTELFEQCQRYYANILTPFSRLVTPKITEILGFNLPVDMIATSHGVVWRDNPTQIVELYLKWAADYQEDRITIFYDTMSNNTRMMADAIAQGIAETDPRVAVKIFNVARSDKNEILTNVFRSKGVLVGTSTMNNVMMPKIAGLVEEMTGLRFRNKRASAFGSHGWSGGAMDRLSTRLQDAGFEMSLSLKAKWRPDQDALELCREHGREIARQWALAPLPQSTVNTVVKEETSATTTADLGPRMQCSVCQWIYDPAKGEPMQDVAPGTPWSEVPDNFLCPECSLGKDVFDELASEAK.

The tract at residues 30–210 (LRGSSYNSYL…PFSRLVTPKI (181 aa)) is zinc metallo-hydrolase. Fe cation-binding residues include His-79, Glu-81, Asp-83, His-147, Asp-166, and His-227. The region spanning 254–393 (ITIFYDTMSN…LCREHGREIA (140 aa)) is the Flavodoxin-like domain. Residues 260–264 (TMSNN) and 342–369 (AFGS…EMSL) contribute to the FMN site. One can recognise a Rubredoxin-like domain in the interval 423–474 (GPRMQCSVCQWIYDPAKGEPMQDVAPGTPWSEVPDNFLCPECSLGKDVFDEL). Positions 428, 431, 461, and 464 each coordinate Fe cation.

It in the N-terminal section; belongs to the zinc metallo-hydrolase group 3 family. As to quaternary structure, homotetramer. The cofactor is Fe cation. It depends on FMN as a cofactor.

Its subcellular location is the cytoplasm. It participates in nitrogen metabolism; nitric oxide reduction. In terms of biological role, anaerobic nitric oxide reductase; uses NADH to detoxify nitric oxide (NO), protecting several 4Fe-4S NO-sensitive enzymes. Has at least 2 reductase partners, only one of which (NorW, flavorubredoxin reductase) has been identified. NO probably binds to the di-iron center; electrons enter from the NorW at rubredoxin and are transferred sequentially to the FMN center and the di-iron center. Also able to function as an aerobic oxygen reductase. The protein is Anaerobic nitric oxide reductase flavorubredoxin of Shigella flexneri serotype 5b (strain 8401).